A 98-amino-acid chain; its full sequence is MEKKKVQKIKIGRVVSDKMDKTVVVAVEELVSHPLYKKTIRRTKKFKAHDEHNACRTGDIVKIAETRPLSKEKRWRVVEIIERGKVLGEEENLETIEG.

This sequence belongs to the universal ribosomal protein uS17 family. Part of the 30S ribosomal subunit.

Functionally, one of the primary rRNA binding proteins, it binds specifically to the 5'-end of 16S ribosomal RNA. The polypeptide is Small ribosomal subunit protein uS17 (Carboxydothermus hydrogenoformans (strain ATCC BAA-161 / DSM 6008 / Z-2901)).